The chain runs to 109 residues: MTTPSRLPDPYGQGQSANLADILERVLDKGVVIAGDIKINLLDIELLTIKLRLVVASVDKAKEMGIDWWESDPALSSRARHDELTRENAALRERLRELDPGRVPREEAP.

It belongs to the gas vesicle GvpA family. In terms of assembly, interacts with GvpA.

The protein localises to the gas vesicle. A minor component of the gas vesicle, might be involved in nucleating gas vesicle formation. Gas vesicles (GV) are hollow, gas filled proteinaceous nanostructures. It is not clear what function GVs perform in soil bacteria. This is Probable gas vesicle protein J1 (gvpJ1) from Streptomyces coelicolor (strain ATCC BAA-471 / A3(2) / M145).